We begin with the raw amino-acid sequence, 375 residues long: Protein GOLM2 (375 aa).

Topologically, residues 1-12 (MVGFGANRRGGR) are cytoplasmic. Residues 13 to 33 (LPSFLLAALLLVIAVLAFNCW) traverse the membrane as a helical; Signal-anchor for type II membrane protein segment. Residues 34 to 198 (NAASRQAVLR…REQKATQRIQ (165 aa)) are a coiled coil. The Lumenal segment spans residues 34–375 (NAASRQAVLR…SKPRFGDGVL (342 aa)). Disordered regions lie at residues 81–102 (LEQK…DGQV), 193–327 (ATQR…DSQN), and 342–375 (RAVG…DGVL). Basic and acidic residues-rich tracts occupy residues 193-204 (ATQRIQSSKDAE) and 350-375 (KQND…DGVL).

It belongs to the GOLM family.

The protein localises to the membrane. The sequence is that of Protein GOLM2 (GOLM2) from Gallus gallus (Chicken).